A 201-amino-acid chain; its full sequence is Pyridoxal 5'-phosphate synthase subunit PdxT (201 aa).

49–51 (GES) contacts L-glutamine. C81 acts as the Nucleophile in catalysis. L-glutamine is bound by residues R110 and 139 to 140 (IR). Residues H180 and E182 each act as charge relay system in the active site.

The protein belongs to the glutaminase PdxT/SNO family. In terms of assembly, in the presence of PdxS, forms a dodecamer of heterodimers. Only shows activity in the heterodimer.

The catalysed reaction is aldehydo-D-ribose 5-phosphate + D-glyceraldehyde 3-phosphate + L-glutamine = pyridoxal 5'-phosphate + L-glutamate + phosphate + 3 H2O + H(+). It catalyses the reaction L-glutamine + H2O = L-glutamate + NH4(+). The protein operates within cofactor biosynthesis; pyridoxal 5'-phosphate biosynthesis. Functionally, catalyzes the hydrolysis of glutamine to glutamate and ammonia as part of the biosynthesis of pyridoxal 5'-phosphate. The resulting ammonia molecule is channeled to the active site of PdxS. This chain is Pyridoxal 5'-phosphate synthase subunit PdxT, found in Salinispora tropica (strain ATCC BAA-916 / DSM 44818 / JCM 13857 / NBRC 105044 / CNB-440).